A 362-amino-acid polypeptide reads, in one-letter code: Beta-ketoacyl-[acyl-carrier-protein] synthase III 2 (362 aa).

Residues Cys-113 and His-251 contribute to the active site. The segment at 252 to 256 (QANIR) is ACP-binding. Asn-281 is a catalytic residue.

It belongs to the thiolase-like superfamily. FabH family. Homodimer.

The protein resides in the cytoplasm. The catalysed reaction is malonyl-[ACP] + acetyl-CoA + H(+) = 3-oxobutanoyl-[ACP] + CO2 + CoA. The protein operates within lipid metabolism; fatty acid biosynthesis. Catalyzes the condensation reaction of fatty acid synthesis by the addition to an acyl acceptor of two carbons from malonyl-ACP. Catalyzes the first condensation reaction which initiates fatty acid synthesis and may therefore play a role in governing the total rate of fatty acid production. Possesses both acetoacetyl-ACP synthase and acetyl transacylase activities. Its substrate specificity determines the biosynthesis of branched-chain and/or straight-chain of fatty acids. The protein is Beta-ketoacyl-[acyl-carrier-protein] synthase III 2 of Vibrio vulnificus (strain YJ016).